The chain runs to 105 residues: UPF0235 protein RPR_04990 (105 aa).

It belongs to the UPF0235 family.

The protein is UPF0235 protein RPR_04990 of Rickettsia peacockii (strain Rustic).